Here is a 271-residue protein sequence, read N- to C-terminus: Putative carboxymethylenebutenolidase (271 aa).

Residues Cys-147, Asp-204, and His-236 contribute to the active site.

This sequence belongs to the dienelactone hydrolase family.

The enzyme catalyses 2-(5-oxo-2,5-dihydrofuran-2-ylidene)acetate + H2O = 4-oxohex-2-enedioate + H(+). In Escherichia coli (strain K12), this protein is Putative carboxymethylenebutenolidase (ysgA).